Here is a 478-residue protein sequence, read N- to C-terminus: Glutamate--tRNA ligase (478 aa).

The 'HIGH' region motif lies at 23 to 33; that stretch reads PSPTGFIHLGN. The span at 130 to 145 shows a compositional bias: basic and acidic residues; that stretch reads KQKPRYDGTWRPEEGK. The segment at 130-153 is disordered; the sequence is KQKPRYDGTWRPEEGKTLPPVPEG. The 'KMSKS' region signature appears at 255-259; the sequence is KMSKR. An ATP-binding site is contributed by Lys-258.

The protein belongs to the class-I aminoacyl-tRNA synthetase family. Glutamate--tRNA ligase type 1 subfamily. As to quaternary structure, monomer.

It is found in the cytoplasm. It carries out the reaction tRNA(Glu) + L-glutamate + ATP = L-glutamyl-tRNA(Glu) + AMP + diphosphate. Catalyzes the attachment of glutamate to tRNA(Glu) in a two-step reaction: glutamate is first activated by ATP to form Glu-AMP and then transferred to the acceptor end of tRNA(Glu). The chain is Glutamate--tRNA ligase from Paracidovorax citrulli (strain AAC00-1) (Acidovorax citrulli).